A 199-amino-acid chain; its full sequence is Potassium-transporting ATPase KdpC subunit (199 aa).

A helical transmembrane segment spans residues 7–27 (PALVMTAALCLITGIIYPGLI).

It belongs to the KdpC family. In terms of assembly, the system is composed of three essential subunits: KdpA, KdpB and KdpC.

It is found in the cell inner membrane. In terms of biological role, part of the high-affinity ATP-driven potassium transport (or Kdp) system, which catalyzes the hydrolysis of ATP coupled with the electrogenic transport of potassium into the cytoplasm. This subunit acts as a catalytic chaperone that increases the ATP-binding affinity of the ATP-hydrolyzing subunit KdpB by the formation of a transient KdpB/KdpC/ATP ternary complex. The sequence is that of Potassium-transporting ATPase KdpC subunit from Gemmatimonas aurantiaca (strain DSM 14586 / JCM 11422 / NBRC 100505 / T-27).